We begin with the raw amino-acid sequence, 149 residues long: Large ribosomal subunit protein uL15 (149 aa).

Basic residues-rich tracts occupy residues 1 to 14 and 21 to 30; these read MPTR…HRGH and RVGKHRKHPG. The interval 1 to 43 is disordered; that stretch reads MPTRFSKTRKHRGHVSAGKGRVGKHRKHPGGRGMAGGQHHHRT.

Belongs to the universal ribosomal protein uL15 family. Component of the large ribosomal subunit (LSU). Mature N.crassa ribosomes consist of a small (40S) and a large (60S) subunit. The 40S small subunit contains 1 molecule of ribosomal RNA (18S rRNA) and at least 32 different proteins. The large 60S subunit contains 3 rRNA molecules (26S, 5.8S and 5S rRNA) and at least 42 different proteins.

The protein resides in the cytoplasm. Component of the ribosome, a large ribonucleoprotein complex responsible for the synthesis of proteins in the cell. The small ribosomal subunit (SSU) binds messenger RNAs (mRNAs) and translates the encoded message by selecting cognate aminoacyl-transfer RNA (tRNA) molecules. The large subunit (LSU) contains the ribosomal catalytic site termed the peptidyl transferase center (PTC), which catalyzes the formation of peptide bonds, thereby polymerizing the amino acids delivered by tRNAs into a polypeptide chain. The nascent polypeptides leave the ribosome through a tunnel in the LSU and interact with protein factors that function in enzymatic processing, targeting, and the membrane insertion of nascent chains at the exit of the ribosomal tunnel. This chain is Large ribosomal subunit protein uL15 (rpl-28), found in Neurospora crassa (strain ATCC 24698 / 74-OR23-1A / CBS 708.71 / DSM 1257 / FGSC 987).